The chain runs to 59 residues: uncharacterized protein (59 aa).

Residues phenylalanine 7–alanine 24 traverse the membrane as a helical segment.

Its subcellular location is the membrane. This is an uncharacterized protein from Rickettsia prowazekii (strain Madrid E).